The primary structure comprises 467 residues: Cysteine--tRNA ligase (467 aa).

A Zn(2+)-binding site is contributed by Cys28. Positions 30 to 40 match the 'HIGH' region motif; sequence PTVYNYIHVGN. Zn(2+)-binding residues include Cys212, His237, and Glu241. A 'KMSKS' region motif is present at residues 269–273; the sequence is KMSKS. Lys272 contributes to the ATP binding site.

This sequence belongs to the class-I aminoacyl-tRNA synthetase family. In terms of assembly, monomer. Zn(2+) serves as cofactor.

Its subcellular location is the cytoplasm. The enzyme catalyses tRNA(Cys) + L-cysteine + ATP = L-cysteinyl-tRNA(Cys) + AMP + diphosphate. This chain is Cysteine--tRNA ligase, found in Oenococcus oeni (strain ATCC BAA-331 / PSU-1).